The sequence spans 89 residues: Small ribosomal subunit protein uS15 (89 aa).

It belongs to the universal ribosomal protein uS15 family. Part of the 30S ribosomal subunit. Forms a bridge to the 50S subunit in the 70S ribosome, contacting the 23S rRNA.

One of the primary rRNA binding proteins, it binds directly to 16S rRNA where it helps nucleate assembly of the platform of the 30S subunit by binding and bridging several RNA helices of the 16S rRNA. In terms of biological role, forms an intersubunit bridge (bridge B4) with the 23S rRNA of the 50S subunit in the ribosome. This Caulobacter sp. (strain K31) protein is Small ribosomal subunit protein uS15.